The sequence spans 428 residues: ATP-dependent RNA helicase RhlB (428 aa).

The Q motif signature appears at 9 to 37; that stretch reads QKFSDFALHPLVLEALEKKGFQHCTPIQA. The region spanning 40–219 is the Helicase ATP-binding domain; that stretch reads LPLTLSGRDV…FEQMNNAEYV (180 aa). 53-60 contributes to the ATP binding site; the sequence is AQTGTGKT. The short motif at 165-168 is the DEAD box element; it reads DEAD. A Helicase C-terminal domain is found at 245–390; that stretch reads RLLQTLIEEE…VSKYNSDALL (146 aa). The interval 392–428 is disordered; the sequence is DLPAPKRLARPRGGNGPRRNSAPRRGGAPRNNRKRSG. Positions 408–421 are enriched in low complexity; the sequence is PRRNSAPRRGGAPR.

Belongs to the DEAD box helicase family. RhlB subfamily. As to quaternary structure, component of the RNA degradosome, which is a multiprotein complex involved in RNA processing and mRNA degradation.

The protein resides in the cytoplasm. The catalysed reaction is ATP + H2O = ADP + phosphate + H(+). Its function is as follows. DEAD-box RNA helicase involved in RNA degradation. Has RNA-dependent ATPase activity and unwinds double-stranded RNA. The polypeptide is ATP-dependent RNA helicase RhlB (Serratia proteamaculans (strain 568)).